The sequence spans 198 residues: ATP-dependent Clp protease proteolytic subunit (198 aa).

The Nucleophile role is filled by Ser-103. Residue His-128 is part of the active site.

Belongs to the peptidase S14 family. In terms of assembly, fourteen ClpP subunits assemble into 2 heptameric rings which stack back to back to give a disk-like structure with a central cavity, resembling the structure of eukaryotic proteasomes.

Its subcellular location is the cytoplasm. The catalysed reaction is Hydrolysis of proteins to small peptides in the presence of ATP and magnesium. alpha-casein is the usual test substrate. In the absence of ATP, only oligopeptides shorter than five residues are hydrolyzed (such as succinyl-Leu-Tyr-|-NHMec, and Leu-Tyr-Leu-|-Tyr-Trp, in which cleavage of the -Tyr-|-Leu- and -Tyr-|-Trp bonds also occurs).. Its function is as follows. Cleaves peptides in various proteins in a process that requires ATP hydrolysis. Has a chymotrypsin-like activity. Plays a major role in the degradation of misfolded proteins. In Ruthia magnifica subsp. Calyptogena magnifica, this protein is ATP-dependent Clp protease proteolytic subunit.